Reading from the N-terminus, the 404-residue chain is Cysteine desulfurase IscS (404 aa).

Residues 75 to 76 (AT), N155, Q183, and 203 to 205 (SGH) each bind pyridoxal 5'-phosphate. Residue K206 is modified to N6-(pyridoxal phosphate)lysine. Residue T243 participates in pyridoxal 5'-phosphate binding. C328 (cysteine persulfide intermediate) is an active-site residue. C328 is a [2Fe-2S] cluster binding site.

It belongs to the class-V pyridoxal-phosphate-dependent aminotransferase family. NifS/IscS subfamily. Homodimer. Forms a heterotetramer with IscU, interacts with other sulfur acceptors. Requires pyridoxal 5'-phosphate as cofactor.

It is found in the cytoplasm. It catalyses the reaction (sulfur carrier)-H + L-cysteine = (sulfur carrier)-SH + L-alanine. It functions in the pathway cofactor biosynthesis; iron-sulfur cluster biosynthesis. Master enzyme that delivers sulfur to a number of partners involved in Fe-S cluster assembly, tRNA modification or cofactor biosynthesis. Catalyzes the removal of elemental sulfur atoms from cysteine to produce alanine. Functions as a sulfur delivery protein for Fe-S cluster synthesis onto IscU, an Fe-S scaffold assembly protein, as well as other S acceptor proteins. The sequence is that of Cysteine desulfurase IscS from Shewanella frigidimarina (strain NCIMB 400).